Consider the following 344-residue polypeptide: C5a anaphylatoxin chemotactic receptor 2 (344 aa).

At 1-44 the chain is on the extracellular side; it reads MMNHTTSEYYDYEYDHEHYSDLPDVPVDCPAGTCFTSDVYLIVL. N3 is a glycosylation site (N-linked (GlcNAc...) asparagine). A helical transmembrane segment spans residues 45 to 67; it reads LVLYAAVFLVGVPGNTLVAWVTW. The Cytoplasmic portion of the chain corresponds to 68-78; it reads KESRHRLGASW. A helical membrane pass occupies residues 79-101; sequence FLHLTMADLLCCVSLPFLAVPIA. Residues 102 to 120 are Extracellular-facing; that stretch reads QKGHWPYGAAGCWLLSSIT. An intrachain disulfide couples C113 to C192. The chain crosses the membrane as a helical span at residues 121 to 143; that stretch reads ILSMYASVLLLTGLSGDLFLLAF. Residues 144–155 lie on the Cytoplasmic side of the membrane; it reads RPSWKGADHRTF. A helical transmembrane segment spans residues 156–178; that stretch reads GVRVVQASSWMLGLLLTVPSAVY. Residues 179-208 lie on the Extracellular side of the membrane; that stretch reads RRLLQEHYPPRLVCGIDYGGSVSAEVAITT. The chain crosses the membrane as a helical span at residues 209 to 231; sequence VRFLFGFLGPLVFMAGCHGILQR. Residues 232–243 are Cytoplasmic-facing; sequence QMARRHWPLGTA. The helical transmembrane segment at 244-266 threads the bilayer; the sequence is VVVGFFICWTPYHVLRVIIAAAP. Residues 267–280 lie on the Extracellular side of the membrane; that stretch reads PHSLLLARVLEAEP. Residues 281 to 300 traverse the membrane as a helical segment; that stretch reads LFNGLALAHSALNPIMFLYF. The Cytoplasmic portion of the chain corresponds to 301–344; sequence GRKQLCKSLQAACHWALRDPQDEESAVTKVSISTSHEMVSEMPV. At S325 the chain carries Phosphoserine.

Belongs to the G-protein coupled receptor 1 family. In terms of assembly, interacts with C3 (the anaphylatoxin peptide C3a and the adipogenic hormone ASP); the interaction occurs with higher affinity for ASP, enhancing the phosphorylation and activation of GPR77, recruitment of ARRB2 to the cell surface and endocytosis of GRP77. In terms of tissue distribution, highly expressed in liver and spleen. Lower levels in intestine, brain and kidney. Also expressed in adipose tissues with highest levels in gonadal and ingual fat depots. Lower levels in brown tissue.

The protein localises to the cell membrane. Its function is as follows. Receptor for the chemotactic and inflammatory C3a, C4a and C5a anaphylatoxin peptides and also for their dearginated forms ASP/C3adesArg, C4adesArg and C5adesArg respectively. Couples weakly to G(i)-mediated signaling pathways. This Mus musculus (Mouse) protein is C5a anaphylatoxin chemotactic receptor 2 (C5ar2).